Consider the following 249-residue polypeptide: Vitamin B12 import ATP-binding protein BtuD (249 aa).

An ABC transporter domain is found at 5–233; it reads MQLQDVAETT…PNLAQAYGMN (229 aa). Residue 33 to 40 coordinates ATP; it reads GPNGAGKS.

It belongs to the ABC transporter superfamily. Vitamin B12 importer (TC 3.A.1.13.1) family. The complex is composed of two ATP-binding proteins (BtuD), two transmembrane proteins (BtuC) and a solute-binding protein (BtuF).

The protein resides in the cell inner membrane. It catalyses the reaction an R-cob(III)alamin(out) + ATP + H2O = an R-cob(III)alamin(in) + ADP + phosphate + H(+). Functionally, part of the ABC transporter complex BtuCDF involved in vitamin B12 import. Responsible for energy coupling to the transport system. This Citrobacter koseri (strain ATCC BAA-895 / CDC 4225-83 / SGSC4696) protein is Vitamin B12 import ATP-binding protein BtuD.